A 211-amino-acid chain; its full sequence is Thymidylate kinase (211 aa).

10–17 provides a ligand contact to ATP; the sequence is GVEGCGKT.

The protein belongs to the thymidylate kinase family.

The enzyme catalyses dTMP + ATP = dTDP + ADP. Functionally, phosphorylation of dTMP to form dTDP in both de novo and salvage pathways of dTTP synthesis. This chain is Thymidylate kinase, found in Nostoc punctiforme (strain ATCC 29133 / PCC 73102).